The following is a 405-amino-acid chain: L-rhamnonate dehydratase (405 aa).

Substrate is bound by residues His-33 and Arg-59. Asp-226, Glu-252, and Glu-280 together coordinate Mg(2+). His-329 functions as the Proton acceptor in the catalytic mechanism. Glu-349 lines the substrate pocket.

This sequence belongs to the mandelate racemase/muconate lactonizing enzyme family. RhamD subfamily. In terms of assembly, homooctamer; tetramer of dimers. Mg(2+) serves as cofactor.

The enzyme catalyses L-rhamnonate = 2-dehydro-3-deoxy-L-rhamnonate + H2O. Functionally, catalyzes the dehydration of L-rhamnonate to 2-keto-3-deoxy-L-rhamnonate (KDR). The sequence is that of L-rhamnonate dehydratase from Shigella boydii serotype 4 (strain Sb227).